Reading from the N-terminus, the 464-residue chain is tRNA modification GTPase MnmE (464 aa).

(6S)-5-formyl-5,6,7,8-tetrahydrofolate is bound by residues R29, E91, and R131. Residues 226 to 387 (GLKVALAGKP…LINYLLKKCG (162 aa)) enclose the TrmE-type G domain. N236 contributes to the K(+) binding site. Residues 236 to 241 (NVGKSS), 255 to 261 (TDLPGTT), and 280 to 283 (DTAG) contribute to the GTP site. S240 is a binding site for Mg(2+). K(+)-binding residues include T255, L257, and T260. T261 serves as a coordination point for Mg(2+). (6S)-5-formyl-5,6,7,8-tetrahydrofolate is bound at residue K464.

This sequence belongs to the TRAFAC class TrmE-Era-EngA-EngB-Septin-like GTPase superfamily. TrmE GTPase family. In terms of assembly, homodimer. Heterotetramer of two MnmE and two MnmG subunits. It depends on K(+) as a cofactor.

The protein resides in the cytoplasm. In terms of biological role, exhibits a very high intrinsic GTPase hydrolysis rate. Involved in the addition of a carboxymethylaminomethyl (cmnm) group at the wobble position (U34) of certain tRNAs, forming tRNA-cmnm(5)s(2)U34. The protein is tRNA modification GTPase MnmE of Prochlorococcus marinus (strain NATL1A).